A 309-amino-acid chain; its full sequence is Metal ABC transporter substrate-binding lipoprotein FimA (309 aa).

The first 20 residues, 1-20 (MKKIASVLALFVALLFGLLA), serve as a signal peptide directing secretion. Cys-21 carries N-palmitoyl cysteine lipidation. Residue Cys-21 is the site of S-diacylglycerol cysteine attachment. A divalent metal cation is bound by residues His-67, His-139, Glu-205, and Asp-280.

The protein belongs to the bacterial solute-binding protein 9 family. Lipoprotein receptor antigen (Lrai) subfamily.

It localises to the cell membrane. In terms of biological role, part of an ATP-binding cassette (ABC) transport system involved in metal import. Binds a metal with high affinity and specificity and delivers it to the membrane permease for translocation into the cytoplasm. Also acts as an adhesin which is involved on adherence to extracellular matrix. It is an important factor in pathogenesis and infection. May contribute to the formation and accumulation of dental plaque. This chain is Metal ABC transporter substrate-binding lipoprotein FimA (fimA), found in Streptococcus parasanguinis.